Consider the following 443-residue polypeptide: MQPLPTLCGRVLVALILACGVAGVQGEERRFPPARATPPLLGFEEIMTPPTKTSWPTGSNASVPRLSAPPQMPKAGRTAGAQRRTLPPPPCERTIEIKETFKYINTVVSCLVFVLGIIGNSTLLRIIYKNKCMRNGPNILIASLALGDLLHIIIDIPINVYKLLAEDWPFGVEMCKLVPFIQKASVGITVLSLCALSIDRYRAVASWSRIKGIGVPKWTAVEIVLIWVVSVVLAVPEAVGFDMITADYKGSYLRICLLHPTQKTAFMQFYKNAKDWWLFSFYFCLPLAITAFFYTLETCEMLRKKSGMQIALNDHLKQRREVAKTVFCLVLVFALCWLPLHLSRILKHTLYDQNDPHRCELLSFLLVLEYIGINMASLNSCINPIALYLVSKRFKNCFKWCLCCWCQSFEEKQSLEDKQSCLKFKANDHGYDNFRSSNKYSSS.

Positions 1 to 26 (MQPLPTLCGRVLVALILACGVAGVQG) are cleaved as a signal peptide. The Extracellular segment spans residues 27–102 (EERRFPPARA…RTIEIKETFK (76 aa)). Polar residues predominate over residues 51-62 (TKTSWPTGSNAS). Residues 51–89 (TKTSWPTGSNASVPRLSAPPQMPKAGRTAGAQRRTLPPP) are disordered. N60 is a glycosylation site (N-linked (GlcNAc...) asparagine). A helical membrane pass occupies residues 103 to 127 (YINTVVSCLVFVLGIIGNSTLLRII). Residues 128–138 (YKNKCMRNGPN) are Cytoplasmic-facing. Residues 139–164 (ILIASLALGDLLHIIIDIPINVYKLL) form a helical membrane-spanning segment. Topologically, residues 165 to 176 (AEDWPFGVEMCK) are extracellular. A disulfide bridge links C175 with C256. The helical transmembrane segment at 177–198 (LVPFIQKASVGITVLSLCALSI) threads the bilayer. The Cytoplasmic segment spans residues 199–219 (DRYRAVASWSRIKGIGVPKWT). Residues 220 to 244 (AVEIVLIWVVSVVLAVPEAVGFDMI) traverse the membrane as a helical segment. The Extracellular segment spans residues 245-272 (TADYKGSYLRICLLHPTQKTAFMQFYKN). Residues 273–297 (AKDWWLFSFYFCLPLAITAFFYTLE) form a helical membrane-spanning segment. The Cytoplasmic segment spans residues 298 to 325 (TCEMLRKKSGMQIALNDHLKQRREVAKT). S306 carries the phosphoserine modification. A helical transmembrane segment spans residues 326-351 (VFCLVLVFALCWLPLHLSRILKHTLY). Residues 352–363 (DQNDPHRCELLS) are Extracellular-facing. Residues 364-390 (FLLVLEYIGINMASLNSCINPIALYLV) traverse the membrane as a helical segment. Topologically, residues 391–443 (SKRFKNCFKWCLCCWCQSFEEKQSLEDKQSCLKFKANDHGYDNFRSSNKYSSS) are cytoplasmic. Residues C403, C404, and C406 are each lipidated (S-palmitoyl cysteine). S420 is modified (phosphoserine). A Phosphotyrosine modification is found at Y440. Phosphoserine is present on residues S441, S442, and S443.

This sequence belongs to the G-protein coupled receptor 1 family. Endothelin receptor subfamily. EDNRB sub-subfamily.

The protein localises to the cell membrane. Its function is as follows. Non-specific receptor for endothelin 1, 2, and 3. Mediates its action by association with G proteins that activate a phosphatidylinositol-calcium second messenger system. This Equus caballus (Horse) protein is Endothelin receptor type B (EDNRB).